Here is a 187-residue protein sequence, read N- to C-terminus: Ribulose bisphosphate carboxylase small subunit, chloroplastic (187 aa).

A chloroplast-targeting transit peptide spans 1 to 56; that stretch reads MASSVMSTATVATGANAAQASMIASFNGLKSAASFPVTRKQDLDITSIASNGGRVE.

Belongs to the RuBisCO small chain family. Heterohexadecamer of 8 large and 8 small subunits.

It is found in the plastid. The protein localises to the chloroplast. Functionally, ruBisCO catalyzes two reactions: the carboxylation of D-ribulose 1,5-bisphosphate, the primary event in carbon dioxide fixation, as well as the oxidative fragmentation of the pentose substrate. Both reactions occur simultaneously and in competition at the same active site. Although the small subunit is not catalytic it is essential for maximal activity. This is Ribulose bisphosphate carboxylase small subunit, chloroplastic from Capsicum annuum (Capsicum pepper).